The primary structure comprises 510 residues: Lysine--tRNA ligase (510 aa).

Mg(2+) contacts are provided by glutamate 420 and glutamate 427.

It belongs to the class-II aminoacyl-tRNA synthetase family. In terms of assembly, homodimer. Mg(2+) serves as cofactor.

The protein resides in the cytoplasm. It carries out the reaction tRNA(Lys) + L-lysine + ATP = L-lysyl-tRNA(Lys) + AMP + diphosphate. The protein is Lysine--tRNA ligase of Ralstonia nicotianae (strain ATCC BAA-1114 / GMI1000) (Ralstonia solanacearum).